Consider the following 133-residue polypeptide: Holo-[acyl-carrier-protein] synthase (133 aa).

Mg(2+)-binding residues include Asp-8 and Glu-56.

This sequence belongs to the P-Pant transferase superfamily. AcpS family. Mg(2+) is required as a cofactor.

It is found in the cytoplasm. The catalysed reaction is apo-[ACP] + CoA = holo-[ACP] + adenosine 3',5'-bisphosphate + H(+). Functionally, transfers the 4'-phosphopantetheine moiety from coenzyme A to a Ser of acyl-carrier-protein. This chain is Holo-[acyl-carrier-protein] synthase, found in Clostridium perfringens (strain 13 / Type A).